The sequence spans 416 residues: Alpha-1-antiproteinase (416 aa).

Positions 1–24 (MALSITRGLLLLAALCCLAPTSLA) are cleaved as a signal peptide. Asn-68, Asn-105, Asn-143, and Asn-269 each carry an N-linked (GlcNAc...) asparagine glycan. Residues 371-390 (GATFLEAIPMSLPPDVEFNR) are RCL. Phosphoserine is present on Ser-381.

The protein belongs to the serpin family. In terms of assembly, interacts with CELA2A. Interacts with ERGIC3 and LMAN1/ERGIC53. Interacts with PRSS1/Trypsin. Plasma.

It is found in the secreted. Inhibits human leukocyte elastase, pig pancreatic elastase and bovine trypsin on a 1:1 molar basis. In Ovis aries (Sheep), this protein is Alpha-1-antiproteinase.